Consider the following 67-residue polypeptide: Ranatuerin-2Vb (67 aa).

Positions 1–22 (MFTLKKSFLLLFFLGTITLSLC) are cleaved as a signal peptide. The propeptide occupies 23–39 (EEERGADDDDGEEEVKR). Cysteines 62 and 67 form a disulfide.

In terms of tissue distribution, expressed by the skin glands.

The protein localises to the secreted. Its function is as follows. Antimicrobial peptide. This is Ranatuerin-2Vb from Odorrana versabilis (Chinese bamboo leaf odorous frog).